The chain runs to 205 residues: MSKSYTLKAEVRERVGKGSSRELRRNGFIPAVIYGDKQPPLAISVPYKEVFYKIHGGGFRTTIATLEIGKEKIQVLPKDYQLDPVRDFPMHVDFLRVSAKSIVHVNIPVHFLNEDTAPGIKRGGVLNIVRHEIECTAPANAIPDAIQIDLSSYSIGDSIHISAVQLPEGVTPVIQDRNFTIATIAAPAGMGDTSEEENNESDAKK.

It belongs to the bacterial ribosomal protein bL25 family. CTC subfamily. In terms of assembly, part of the 50S ribosomal subunit; part of the 5S rRNA/L5/L18/L25 subcomplex. Contacts the 5S rRNA. Binds to the 5S rRNA independently of L5 and L18.

Its function is as follows. This is one of the proteins that binds to the 5S RNA in the ribosome where it forms part of the central protuberance. This Bartonella bacilliformis (strain ATCC 35685 / KC583 / Herrer 020/F12,63) protein is Large ribosomal subunit protein bL25.